Consider the following 334-residue polypeptide: Protein-methionine-sulfoxide reductase catalytic subunit MsrP (334 aa).

The tat-type signal signal peptide spans 1 to 44 (MKKNQFLKESDVTAESVFFMTRRQVLKALGISAAALSLPHAAHA). Mo-molybdopterin is bound by residues Asn-88, 91 to 92 (YE), Cys-146, Thr-181, Asn-233, Arg-238, and 249 to 251 (GIK).

This sequence belongs to the MsrP family. In terms of assembly, heterodimer of a catalytic subunit (MsrP) and a heme-binding subunit (MsrQ). Requires Mo-molybdopterin as cofactor. Post-translationally, predicted to be exported by the Tat system. The position of the signal peptide cleavage has not been experimentally proven.

It localises to the periplasm. It carries out the reaction L-methionyl-[protein] + a quinone + H2O = L-methionyl-(S)-S-oxide-[protein] + a quinol. The catalysed reaction is L-methionyl-[protein] + a quinone + H2O = L-methionyl-(R)-S-oxide-[protein] + a quinol. Functionally, part of the MsrPQ system that repairs oxidized periplasmic proteins containing methionine sulfoxide residues (Met-O), using respiratory chain electrons. Thus protects these proteins from oxidative-stress damage caused by reactive species of oxygen and chlorine generated by the host defense mechanisms. MsrPQ is essential for the maintenance of envelope integrity under bleach stress, rescuing a wide series of structurally unrelated periplasmic proteins from methionine oxidation, including the primary periplasmic chaperone SurA and the lipoprotein Pal. The catalytic subunit MsrP is non-stereospecific, being able to reduce both (R-) and (S-) diastereoisomers of methionine sulfoxide. This is Protein-methionine-sulfoxide reductase catalytic subunit MsrP from Escherichia coli (strain 55989 / EAEC).